Reading from the N-terminus, the 131-residue chain is Large ribosomal subunit protein bL17 (131 aa).

Belongs to the bacterial ribosomal protein bL17 family. In terms of assembly, part of the 50S ribosomal subunit. Contacts protein L32.

This is Large ribosomal subunit protein bL17 from Shewanella frigidimarina (strain NCIMB 400).